We begin with the raw amino-acid sequence, 607 residues long: Matrix metalloproteinase-16 (607 aa).

An N-terminal signal peptide occupies residues 1-31 (MILLTFSTGRRLDFVHHSGVFFLQTLLWILC). Residues 32–119 (ATVCGTEQYF…SSKFHIRRKR (88 aa)) constitute a propeptide that is removed on maturation. A glycan (N-linked (GlcNAc...) asparagine) is linked at N83. The Cysteine switch motif lies at 99 to 106 (PRCGVPDQ). Position 101 (C101) interacts with Zn(2+). Over 120–564 (YALTGQKWQH…LDNTASTVKA (445 aa)) the chain is Extracellular. D183 contributes to the Ca(2+) binding site. Zn(2+) is bound by residues H193 and D195. Residues D200, G201, G203, and F205 each coordinate Ca(2+). H208 provides a ligand contact to Zn(2+). Positions 215, 217, and 219 each coordinate Ca(2+). Zn(2+) is bound at residue H221. Ca(2+) contacts are provided by D223 and E226. H246 serves as a coordination point for Zn(2+). Residue E247 is part of the active site. Zn(2+)-binding residues include H250 and H256. Residues 281–340 (DDLQGIQKIYGPPDKIPPPTRPLPTVPPHRSIPPADPRKNDRPKPPRPPTGRPSYPGAKP) are disordered. A compositionally biased stretch (pro residues) spans 294-315 (DKIPPPTRPLPTVPPHRSIPPA). 4 Hemopexin repeats span residues 340 to 388 (PNIC…WRGL), 389 to 434 (PPSI…GSGI), 436 to 484 (PHGI…KGIP), and 485 to 532 (ESPQ…FMGC). Residues C343 and C532 are joined by a disulfide bond. Residues 565–585 (IAIVIPCILALCLLVLVYTVF) traverse the membrane as a helical segment. The Cytoplasmic portion of the chain corresponds to 586–607 (QFKRKGTPRHILYCKRSMQEWV).

Belongs to the peptidase M10A family. Interacts with CSPG4 through CSPG4 chondroitin sulfate glycosaminoglycan. Zn(2+) serves as cofactor. Requires Ca(2+) as cofactor. Post-translationally, the precursor is cleaved by a furin endopeptidase. As to expression, expressed in heart, brain, placenta, ovary and small intestine. Isoform Short is found in the ovary.

It localises to the cell membrane. The protein resides in the secreted. Its subcellular location is the extracellular space. It is found in the extracellular matrix. The protein localises to the cell surface. TIMP-2 shows little inhibitory activity compared to TIMP-1. TIMP-1 seems to have less binding affinity than TIMP-2 for the short isoform. In terms of biological role, endopeptidase that degrades various components of the extracellular matrix, such as collagen type III and fibronectin. Activates progelatinase A. Involved in the matrix remodeling of blood vessels. Isoform short cleaves fibronectin and also collagen type III, but at lower rate. It has no effect on type I, II, IV and V collagen. However, upon interaction with CSPG4, it may be involved in degradation and invasion of type I collagen by melanoma cells. The polypeptide is Matrix metalloproteinase-16 (Homo sapiens (Human)).